The sequence spans 406 residues: Nicotinate phosphoribosyltransferase (406 aa).

H225 is modified (phosphohistidine; by autocatalysis).

The protein belongs to the NAPRTase family. Transiently phosphorylated on a His residue during the reaction cycle. Phosphorylation strongly increases the affinity for substrates and increases the rate of nicotinate D-ribonucleotide production. Dephosphorylation regenerates the low-affinity form of the enzyme, leading to product release.

It catalyses the reaction nicotinate + 5-phospho-alpha-D-ribose 1-diphosphate + ATP + H2O = nicotinate beta-D-ribonucleotide + ADP + phosphate + diphosphate. It participates in cofactor biosynthesis; NAD(+) biosynthesis; nicotinate D-ribonucleotide from nicotinate: step 1/1. Functionally, catalyzes the synthesis of beta-nicotinate D-ribonucleotide from nicotinate and 5-phospho-D-ribose 1-phosphate at the expense of ATP. The chain is Nicotinate phosphoribosyltransferase from Psychromonas ingrahamii (strain DSM 17664 / CCUG 51855 / 37).